Reading from the N-terminus, the 280-residue chain is Undecaprenyl-diphosphatase (280 aa).

8 consecutive transmembrane segments (helical) span residues 2–22 (FIIEIFISIIYGIIEGITEWL), 45–65 (AFMEMFNVVIQLGAILAVVVI), 86–106 (WQLWAKVVVAALPAAVIGLFL), 114–134 (FYNLVSVSVMLIVYGAAFIYL), 147–167 (LASLPYKTALQIGLFQILALF), 188–208 (SVVTEFTFYLGIPIMFGASGW), 223–243 (GQIFLLLVAMGVAFGVSLVVI), and 255–275 (FTIFGKYRIGLGGVLLVYAAI).

This sequence belongs to the UppP family.

Its subcellular location is the cell membrane. It catalyses the reaction di-trans,octa-cis-undecaprenyl diphosphate + H2O = di-trans,octa-cis-undecaprenyl phosphate + phosphate + H(+). Catalyzes the dephosphorylation of undecaprenyl diphosphate (UPP). Confers resistance to bacitracin. The sequence is that of Undecaprenyl-diphosphatase from Streptococcus sanguinis (strain SK36).